The primary structure comprises 364 residues: Spermidine/putrescine import ATP-binding protein PotA (364 aa).

The ABC transporter domain occupies 6 to 236 (IEIRQIYKSY…PANLHVAMFI (231 aa)). 38-45 (GPSGCGKT) provides a ligand contact to ATP.

The protein belongs to the ABC transporter superfamily. Spermidine/putrescine importer (TC 3.A.1.11.1) family. In terms of assembly, the complex is composed of two ATP-binding proteins (PotA), two transmembrane proteins (PotB and PotC) and a solute-binding protein (PotD).

It is found in the cell inner membrane. It catalyses the reaction ATP + H2O + polyamine-[polyamine-binding protein]Side 1 = ADP + phosphate + polyamineSide 2 + [polyamine-binding protein]Side 1.. Functionally, part of the ABC transporter complex PotABCD involved in spermidine/putrescine import. Responsible for energy coupling to the transport system. This Legionella pneumophila subsp. pneumophila (strain Philadelphia 1 / ATCC 33152 / DSM 7513) protein is Spermidine/putrescine import ATP-binding protein PotA.